A 366-amino-acid chain; its full sequence is Outer membrane protein IIIA (366 aa).

Positions 1–22 are cleaved as a signal peptide; that stretch reads MNIRMVLLASAAAFAASTPVLA.

It belongs to the alphaproteobacteria porin family. In terms of assembly, forms calcium-stabilized oligomers. Attached covalently to peptidoglycan.

It is found in the cell outer membrane. Functionally, may act as an outer membrane pore. This chain is Outer membrane protein IIIA (ropA), found in Rhizobium leguminosarum bv. viciae.